Consider the following 78-residue polypeptide: MSRVCQVTGKRPAVGNNRSHALNATRRRFLPNLHTHRFWVESENRFVTLRLTAKGMRIIDKKGIDAVLAEIRARGEKI.

The tract at residues 1–20 (MSRVCQVTGKRPAVGNNRSH) is disordered.

This sequence belongs to the bacterial ribosomal protein bL28 family.

The sequence is that of Large ribosomal subunit protein bL28 from Actinobacillus pleuropneumoniae serotype 7 (strain AP76).